The primary structure comprises 485 residues: Probable trichothecene esterase SAT6 (485 aa).

The segment at 1 to 23 (MPQDPNTTLQMSSSKPSLSDLSV) is disordered. The span at 9–23 (LQMSSSKPSLSDLSV) shows a compositional bias: low complexity. Active-site charge relay system residues include Ser262, Asp406, and His438.

The protein belongs to the AB hydrolase superfamily. Lipase family.

It functions in the pathway mycotoxin biosynthesis. In terms of biological role, probable trichothecene esterase; part of the satratoxin SC1 cluster involved in the biosynthesis of satratoxins, trichothecene mycotoxins that are associated with human food poisonings. Satratoxins are suggested to be made by products of multiple gene clusters (SC1, SC2 and SC3) that encode 21 proteins in all, including polyketide synthases, acetyltransferases, and other enzymes expected to modify the trichothecene skeleton. SC1 encodes 10 proteins, SAT1 to SAT10. The largest are SAT8, which encodes a putative polyketide synthase (PKS) with a conventional non-reducing architecture, and SAT10, a putative protein containing four ankyrin repeats and thus may be involved in protein scaffolding. The putative short-chain reductase SAT3 may assist the PKS in some capacity. SAT6 contains a secretory lipase domain and acts probably as a trichothecene esterase. SAT5 encodes a putative acetyltransferase, and so, with SAT6, may affect endogenous protection from toxicity. The probable transcription factor SAT9 may regulate the expression of the SC1 cluster. SC2 encodes proteins SAT11 to SAT16, the largest of which encodes the putative reducing PKS SAT13. SAT11 is a cytochrome P450 monooxygenase, while SAT14 and SAT16 are probable acetyltransferases. The SC2 cluster may be regulated by the transcription factor SAT15. SC3 is a small cluster that encodes 5 proteins, SAT17 to SAT21. SAT21 is a putative MFS-type transporter which may have a role in exporting secondary metabolites. The four other proteins putatively encoded in SC3 include the taurine hydroxylase-like protein SAT17, the O-methyltransferase SAT18, the acetyltransferase SAT19, and the Cys6-type zinc finger SAT20, the latter being probably involved in regulation of SC3 expression. This chain is Probable trichothecene esterase SAT6, found in Stachybotrys chartarum (strain CBS 109288 / IBT 7711) (Toxic black mold).